Consider the following 274-residue polypeptide: Triosephosphate isomerase (274 aa).

13–15 is a substrate binding site; that stretch reads NWK. H98 acts as the Electrophile in catalysis. E170 functions as the Proton acceptor in the catalytic mechanism. Substrate-binding residues include G176 and S216.

The protein belongs to the triosephosphate isomerase family. Homodimer.

The protein localises to the cytoplasm. The enzyme catalyses D-glyceraldehyde 3-phosphate = dihydroxyacetone phosphate. Its pathway is carbohydrate biosynthesis; gluconeogenesis. The protein operates within carbohydrate degradation; glycolysis; D-glyceraldehyde 3-phosphate from glycerone phosphate: step 1/1. In terms of biological role, involved in the gluconeogenesis. Catalyzes stereospecifically the conversion of dihydroxyacetone phosphate (DHAP) to D-glyceraldehyde-3-phosphate (G3P). This is Triosephosphate isomerase from Onion yellows phytoplasma (strain OY-M).